Here is a 67-residue protein sequence, read N- to C-terminus: Large ribosomal subunit protein bL32 (67 aa).

Positions 1 to 19 (MAVPKRKMSRSNTRARRSQ) are enriched in basic residues. The tract at residues 1-21 (MAVPKRKMSRSNTRARRSQWK) is disordered.

The protein belongs to the bacterial ribosomal protein bL32 family.

This Clavibacter michiganensis subsp. michiganensis (strain NCPPB 382) protein is Large ribosomal subunit protein bL32.